The primary structure comprises 192 residues: ATP-dependent Clp protease proteolytic subunit 1 (192 aa).

Ser92 (nucleophile) is an active-site residue. The active site involves His117.

Belongs to the peptidase S14 family. As to quaternary structure, fourteen ClpP subunits assemble into 2 heptameric rings which stack back to back to give a disk-like structure with a central cavity, resembling the structure of eukaryotic proteasomes.

The protein resides in the cytoplasm. The catalysed reaction is Hydrolysis of proteins to small peptides in the presence of ATP and magnesium. alpha-casein is the usual test substrate. In the absence of ATP, only oligopeptides shorter than five residues are hydrolyzed (such as succinyl-Leu-Tyr-|-NHMec, and Leu-Tyr-Leu-|-Tyr-Trp, in which cleavage of the -Tyr-|-Leu- and -Tyr-|-Trp bonds also occurs).. Functionally, cleaves peptides in various proteins in a process that requires ATP hydrolysis. Has a chymotrypsin-like activity. Plays a major role in the degradation of misfolded proteins. The sequence is that of ATP-dependent Clp protease proteolytic subunit 1 from Chlamydia trachomatis serovar D (strain ATCC VR-885 / DSM 19411 / UW-3/Cx).